The sequence spans 384 residues: Substance-K receptor (384 aa).

At 1-32 (MGACVVMTDINISSGLDSNATGITAFSMPGWQ) the chain is on the extracellular side. N-linked (GlcNAc...) asparagine glycosylation is found at asparagine 11 and asparagine 19. The helical transmembrane segment at 33-56 (LALWTAAYLALVLVAVMGNATVIW) threads the bilayer. Residues 57–69 (IILAHQRMRTVTN) lie on the Cytoplasmic side of the membrane. A helical transmembrane segment spans residues 70–90 (YFIVNLALADLCMAAFNAAFN). Over 91–107 (FVYASHNIWYFGRAFCY) the chain is Extracellular. Residues cysteine 106 and cysteine 181 are joined by a disulfide bond. The chain crosses the membrane as a helical span at residues 108 to 129 (FQNLFPITAMFVSIYSMTAIAA). The Cytoplasmic portion of the chain corresponds to 130 to 149 (DRYMAIVHPFQPRLSAPGTR). A helical membrane pass occupies residues 150–170 (AVIAGIWLVALALAFPQCFYS). Topologically, residues 171 to 196 (TITTDEGATKCVVAWPEDSGGKMLLL) are extracellular. The helical transmembrane segment at 197–218 (YHLIVIALIYFLPLVVMFVAYS) threads the bilayer. Residues 219-251 (VIGLTLWRRSVPGHQAHGANLRHLQAKKKFVKT) lie on the Cytoplasmic side of the membrane. The chain crosses the membrane as a helical span at residues 252–272 (MVLVVVTFAICWLPYHLYFIL). Residues 273-290 (GTFQEDIYCHKFIQQVYL) are Extracellular-facing. A helical membrane pass occupies residues 291–310 (ALFWLAMSSTMYNPIIYCCL). Topologically, residues 311–384 (NHRFRSGFRL…SPQAGVSTEP (74 aa)) are cytoplasmic. Cysteine 324 is lipidated: S-palmitoyl cysteine.

It belongs to the G-protein coupled receptor 1 family.

It localises to the cell membrane. In terms of biological role, this is a receptor for the tachykinin neuropeptide substance K (neurokinin A). It is associated with G proteins that activate a phosphatidylinositol-calcium second messenger system. The rank order of affinity of this receptor to tachykinins is: substance K &gt; neuromedin-K &gt; substance P. The chain is Substance-K receptor (TACR2) from Bos taurus (Bovine).